Reading from the N-terminus, the 578-residue chain is Raftlin (578 aa).

G2 carries N-myristoyl glycine lipidation. C3 is lipidated: S-palmitoyl cysteine. Positions V169–T184 are enriched in polar residues. 3 disordered regions span residues V169–E271, F449–L525, and C551–N578. 3 positions are modified to phosphoserine: S183, S199, and S220. Residues E185 to G206 are compositionally biased toward basic and acidic residues. Basic residues predominate over residues R457 to L466. A compositionally biased stretch (basic and acidic residues) spans S467–S485. S505 carries the phosphoserine modification. Basic and acidic residues-rich tracts occupy residues E506–E518 and P557–N578.

The protein belongs to the raftlin family. In terms of assembly, interacts with TLR4; the interaction occurs in response to lipopolysaccharide stimulation. Interacts with CLTC; the interaction occurs in response to pathogens. Interacts with AP2A1 and AP2B1. Expressed in B-cells (at protein level). Expressed in dendritic cells and macrophages.

Its subcellular location is the cell membrane. The protein resides in the cytoplasm. The protein localises to the membrane raft. It localises to the endosome. It is found in the early endosome. Involved in protein trafficking via association with clathrin and AP2 complex. Upon bacterial lipopolysaccharide stimulation, mediates internalization of TLR4 to endosomes in dendritic cells and macrophages; and internalization of poly(I:C) to TLR3-positive endosomes in myeloid dendritic cells and epithelial cells; resulting in activation of TICAM1-mediated signaling and subsequent IFNB1 production. Involved in T-cell antigen receptor-mediated signaling by regulating tyrosine kinase LCK localization, T-cell dependent antibody production and cytokine secretion. May regulate B-cell antigen receptor-mediated signaling. May play a pivotal role in the formation and/or maintenance of lipid rafts. In Homo sapiens (Human), this protein is Raftlin (RFTN1).